The chain runs to 269 residues: MTTPIPTPYEDLLRDVLANGSHKSDRTGTGTRSVFGRQLRFDLADGFPLITTKRVHFKSIAYELLWFLRGDSNVGWLRENGVSIWDEWADERGELGPVYGVQWRSWPSPDGTHIDQIQQVVDTLRRDPDSRRIIVSAWNVADIPDMALAPCHAFFQFYVADGKLSCQLYQRSADMFLGVPFNIASYALLTLMVAQQVGLEPGEFVWTGGDVHIYDNHIEQVNEQLSRNPFPAPALRFARRPESVFDYRYEDFVLEGYRHHPAIRAAVAV.

Arg26 contacts dUMP. His56 provides a ligand contact to (6R)-5,10-methylene-5,6,7,8-tetrahydrofolate. 131–132 is a dUMP binding site; it reads RR. Cys151 acts as the Nucleophile in catalysis. DUMP contacts are provided by residues 171–174, Asn182, and 212–214; these read RSAD and HIY. Asp174 is a (6R)-5,10-methylene-5,6,7,8-tetrahydrofolate binding site. Ala268 contacts (6R)-5,10-methylene-5,6,7,8-tetrahydrofolate.

It belongs to the thymidylate synthase family. Bacterial-type ThyA subfamily. In terms of assembly, homodimer.

It is found in the cytoplasm. It carries out the reaction dUMP + (6R)-5,10-methylene-5,6,7,8-tetrahydrofolate = 7,8-dihydrofolate + dTMP. It participates in pyrimidine metabolism; dTTP biosynthesis. Functionally, catalyzes the reductive methylation of 2'-deoxyuridine-5'-monophosphate (dUMP) to 2'-deoxythymidine-5'-monophosphate (dTMP) while utilizing 5,10-methylenetetrahydrofolate (mTHF) as the methyl donor and reductant in the reaction, yielding dihydrofolate (DHF) as a by-product. This enzymatic reaction provides an intracellular de novo source of dTMP, an essential precursor for DNA biosynthesis. The protein is Thymidylate synthase of Leifsonia xyli subsp. xyli (strain CTCB07).